A 408-amino-acid polypeptide reads, in one-letter code: tRNA pseudouridine synthase D (408 aa).

Catalysis depends on Asp-76, which acts as the Nucleophile. Residues 149-362 form the TRUD domain; that stretch reads GFINYYDSQR…NSFERKVRIL (214 aa).

This sequence belongs to the pseudouridine synthase TruD family.

It carries out the reaction uridine(13) in tRNA = pseudouridine(13) in tRNA. In terms of biological role, responsible for synthesis of pseudouridine from uracil-13 in transfer RNAs. The chain is tRNA pseudouridine synthase D from Leptospira interrogans serogroup Icterohaemorrhagiae serovar Lai (strain 56601).